A 174-amino-acid polypeptide reads, in one-letter code: U-stichotoxin-Hau2a (174 aa).

Residues 1-18 (MKPIFIVALLFSTCLVNA) form the signal peptide. The propeptide occupies 19 to 33 (KPSINDADIKREPEP). Hydroxyproline is present on Pro-39. Cystine bridges form between Cys-40/Cys-51 and Cys-43/Cys-58. Positions 61 to 67 (RKREPEP) are excised as a propeptide. The residue at position 73 (Pro-73) is a Hydroxyproline. Cystine bridges form between Cys-74–Cys-85 and Cys-77–Cys-92. Positions 95-101 (RKREPEP) are excised as a propeptide. A Hydroxyproline modification is found at Pro-107. Disulfide bonds link Cys-108–Cys-119 and Cys-111–Cys-126. The propeptide occupies 129–135 (RKREPEP). Hydroxyproline is present on Pro-141. 2 cysteine pairs are disulfide-bonded: Cys-142-Cys-153 and Cys-145-Cys-160. The propeptide occupies 163-174 (RKREPENQDLWS).

It belongs to the sea anemone BBH family.

The protein resides in the secreted. Its subcellular location is the nematocyst. Its function is as follows. Neurotoxin that paralyzes freshwater crabs at high concentration. The chain is U-stichotoxin-Hau2a from Heteractis aurora (Banded sea anemone).